Here is a 492-residue protein sequence, read N- to C-terminus: MELNQPPLPTEIDGDAYHKPSFNDLGLKESVLKSVYEAGFTSPSPIQEKAIPAVLQGRDVIAQAQTGTGKTAAFALPIINNLKNNHTIEALVITPTRELAMQISDEIFKLGKHTRTKTVCVYGGQSVKKQCEFIKKNPQVMIATPGRLLDHLKNERIHKFVPKVVVLDESDEMLDMGFLDDIEEIFDYLPSEAQILLFSATMPEPIKRLADKILENPIKIHIAPSNITNTDITQRFYVINEHERAEAIMRLLDTQAPKKSIVFTRTKKEADELHQFLASKNYKSTALHGDMDQRDRRSSIMAFKKNDADVLVATDVASRGLDISGVSHVFNYHLPLNTESYIHRIGRTGRAGKKGMAITLVTPLEYKELLRMQKEIDSEIELFEIPTINENQIIKTLHDAKVSEGIISLYEQLTEIFEPSQLVLKLLSLQFETSKIGLNQQEIDAIQNPKEKTPKPSNKKTPQHERARSFKKGQHRDRHPKTNHYSKKPKRR.

A Q motif motif is present at residues 20 to 48 (PSFNDLGLKESVLKSVYEAGFTSPSPIQE). The Helicase ATP-binding domain occupies 51-220 (IPAVLQGRDV…DKILENPIKI (170 aa)). An ATP-binding site is contributed by 64–71 (AQTGTGKT). A DEAD box motif is present at residues 168–171 (DESD). The 163-residue stretch at 231-393 (DITQRFYVIN…EIPTINENQI (163 aa)) folds into the Helicase C-terminal domain. Residues 445–492 (AIQNPKEKTPKPSNKKTPQHERARSFKKGQHRDRHPKTNHYSKKPKRR) form a disordered region. Basic residues predominate over residues 469–492 (SFKKGQHRDRHPKTNHYSKKPKRR).

This sequence belongs to the DEAD box helicase family. In terms of assembly, homodimer. Interacts with RNase J (rnj), might be a member of a minimal RNA degradosome complex.

The protein resides in the cytoplasm. It catalyses the reaction ATP + H2O = ADP + phosphate + H(+). DEAD-box RNA helicase probably involved in RNA degradation. Unwinds dsRNA in both 5'- and 3'-directions. This chain is DEAD-box ATP-dependent RNA helicase RhpA (rhpA), found in Helicobacter pylori (strain ATCC 700392 / 26695) (Campylobacter pylori).